The chain runs to 234 residues: ATP synthase subunit a 2 (234 aa).

Helical transmembrane passes span 20–40 (ATLIFTWLVMGVLVVGSWFVT), 78–98 (YLPFIGTLFIFIALSNLLSVI), 107–127 (SLSTTTALALCVFFAVPLYGV), 169–189 (VMSGTMIVGILLSVAPLFFPV), and 194–214 (LGLLTGVIQAYIFAILAMVFI).

This sequence belongs to the ATPase A chain family. F-type ATPases have 2 components, CF(1) - the catalytic core - and CF(0) - the membrane proton channel. CF(1) has five subunits: alpha(3), beta(3), gamma(1), delta(1), epsilon(1). CF(0) has four main subunits: a, b, b' and c.

It is found in the cellular thylakoid membrane. Key component of the proton channel; it plays a direct role in the translocation of protons across the membrane. The sequence is that of ATP synthase subunit a 2 from Acaryochloris marina (strain MBIC 11017).